We begin with the raw amino-acid sequence, 104 residues long: L-rhamnose mutarotase (104 aa).

Residue Tyr-18 coordinates substrate. The Proton donor role is filled by His-22. Substrate is bound by residues Tyr-41 and Trp-76–Trp-77.

Belongs to the rhamnose mutarotase family. Homodimer.

It localises to the cytoplasm. It catalyses the reaction alpha-L-rhamnose = beta-L-rhamnose. It functions in the pathway carbohydrate metabolism; L-rhamnose metabolism. Functionally, involved in the anomeric conversion of L-rhamnose. The protein is L-rhamnose mutarotase of Burkholderia cenocepacia (strain HI2424).